Consider the following 427-residue polypeptide: Flotillin-1 (427 aa).

A phosphoserine mark is found at serine 19, serine 163, and serine 385. Threonine 387 is modified (phosphothreonine).

Belongs to the band 7/mec-2 family. Flotillin subfamily. Heterooligomeric complex of flotillin-1 and flotillin-2 and caveolin-1 and caveolin-2. Interacts with ECPAS.

It is found in the cell membrane. Its subcellular location is the endosome. It localises to the membrane. The protein resides in the caveola. The protein localises to the melanosome. It is found in the membrane raft. May act as a scaffolding protein within caveolar membranes, functionally participating in formation of caveolae or caveolae-like vesicles. In Homo sapiens (Human), this protein is Flotillin-1 (FLOT1).